The primary structure comprises 115 residues: MIFMKEIVAIIRPEKLEEVKNALEAAGCHGMTVTEVRGRGRQLGITESYRGRDYRIDLLPKTKIEIVVNDEDVDTVVETIVKSAQTGDIGDGKIFISGVDEVVRIRTGESGKKAV.

At tyrosine 54 the chain carries O-UMP-tyrosine.

The protein belongs to the P(II) protein family.

Could be involved in the regulation of nitrogen fixation. This is Nitrogen regulatory protein P-II 2 from Methanothermobacter thermautotrophicus (strain ATCC 29096 / DSM 1053 / JCM 10044 / NBRC 100330 / Delta H) (Methanobacterium thermoautotrophicum).